The sequence spans 146 residues: NADH-ubiquinone oxidoreductase chain 6 (146 aa).

Helical transmembrane passes span 10 to 30 (ILAIGLLSPVQSILALILLFV), 43 to 63 (LMGILYILVYVGAIAILFLFI), 81 to 101 (VIVLILIPLIPLDIAFEPIAI), and 124 to 144 (APMLVIIGIILIVSVIGAIAM).

This sequence belongs to the complex I subunit 6 family.

It localises to the mitochondrion membrane. The catalysed reaction is a ubiquinone + NADH + 5 H(+)(in) = a ubiquinol + NAD(+) + 4 H(+)(out). Core subunit of the mitochondrial membrane respiratory chain NADH dehydrogenase (Complex I) that is believed to belong to the minimal assembly required for catalysis. Complex I functions in the transfer of electrons from NADH to the respiratory chain. The immediate electron acceptor for the enzyme is believed to be ubiquinone. This chain is NADH-ubiquinone oxidoreductase chain 6 (NAD6), found in Candida albicans (strain SC5314 / ATCC MYA-2876) (Yeast).